The primary structure comprises 454 residues: CBL-interacting protein kinase 33 (454 aa).

Positions 13–268 constitute a Protein kinase domain; that stretch reads YELGRTIGEG…IPEILEDEWF (256 aa). ATP-binding positions include 19–27 and K42; that span reads IGEGTFAKV. The active-site Proton acceptor is the D136. The segment at 154–183 is activation loop; sequence DFGLSALSQQIKDDGLLHTTCGTPNYVAPE. The 25-residue stretch at 305-329 folds into the NAF domain; the sequence is EEPEALNAFELISMSAGLNLGNLFD. Residues 335-364 are PPI; it reads KRETRFTSKCPPKEIVRKIEEAAKPLGFDV.

It belongs to the protein kinase superfamily. CAMK Ser/Thr protein kinase family. SNF1 subfamily. It depends on Mn(2+) as a cofactor.

The enzyme catalyses L-seryl-[protein] + ATP = O-phospho-L-seryl-[protein] + ADP + H(+). It carries out the reaction L-threonyl-[protein] + ATP = O-phospho-L-threonyl-[protein] + ADP + H(+). Functionally, CIPK serine-threonine protein kinases interact with CBL proteins. Binding of a CBL protein to the regulatory NAF domain of CIPK protein lead to the activation of the kinase in a calcium-dependent manner. This is CBL-interacting protein kinase 33 (CIPK33) from Oryza sativa subsp. japonica (Rice).